A 181-amino-acid polypeptide reads, in one-letter code: Oligoribonuclease (181 aa).

Residues 8 to 171 (LIWIDLEMTG…QDIQESIAEL (164 aa)) enclose the Exonuclease domain. Residue Tyr-129 is part of the active site.

The protein belongs to the oligoribonuclease family.

It is found in the cytoplasm. Its function is as follows. 3'-to-5' exoribonuclease specific for small oligoribonucleotides. The polypeptide is Oligoribonuclease (Shewanella oneidensis (strain ATCC 700550 / JCM 31522 / CIP 106686 / LMG 19005 / NCIMB 14063 / MR-1)).